The primary structure comprises 106 residues: MNDSEFHRLADQLWLTIEERLDDWDGDSDIDCEINGGVLTITFENGSKIIINRQEPLHQVWLATKQGGYHFDMKGDEWICDRSGETFWDLLEQAATQQAGETVSFR.

This sequence belongs to the frataxin family.

Its function is as follows. Involved in iron-sulfur (Fe-S) cluster assembly. May act as a regulator of Fe-S biogenesis. This chain is Iron-sulfur cluster assembly protein CyaY, found in Escherichia coli (strain SMS-3-5 / SECEC).